A 130-amino-acid chain; its full sequence is U-scoloptoxin(16)-Er4a (130 aa).

The signal sequence occupies residues 1-26 (MNTVSVVQFLAVGCAVFVLYGRGVFA).

Belongs to the scoloptoxin-16 family. Contains 3 disulfide bonds. In terms of tissue distribution, expressed by the venom gland.

The protein resides in the secreted. The sequence is that of U-scoloptoxin(16)-Er4a from Ethmostigmus rubripes (Giant centipede).